We begin with the raw amino-acid sequence, 323 residues long: MIEFGDFYRLIAKGPLSPWLDILPAQLSAWQRESLHGKFKTWFNAVEHLPQLTPTTLDLHSGVRAEMSPPISAGQREGMENMLRALMPWRKGPFSLYGLEIDTEWRSDWKWQRVLPHISPLAGRTILDVGCGSGYHLWRMIGEGAHLAVGIDPMQLFLCQFEAIRKLLGGDQRAHVLPLGIEQLPELAAFDTVFSMGVLYHRRSPLDHLYQLKNQLVTDGELVLETLVVEGDSQQVLVPGDRYAQMRNVYFIPSAPALKAWLEKCGFVDVRIADMAVTTTEEQRRTDWMTSESLAEFLDPHDHSKTVEGYPAPLRAVLIARKP.

Carboxy-S-adenosyl-L-methionine contacts are provided by residues Lys91, Trp105, Lys110, Gly130, 181–182 (IE), Met196, Tyr200, and Arg315.

This sequence belongs to the class I-like SAM-binding methyltransferase superfamily. CmoB family. Homotetramer.

The catalysed reaction is carboxy-S-adenosyl-L-methionine + 5-hydroxyuridine(34) in tRNA = 5-carboxymethoxyuridine(34) in tRNA + S-adenosyl-L-homocysteine + H(+). Functionally, catalyzes carboxymethyl transfer from carboxy-S-adenosyl-L-methionine (Cx-SAM) to 5-hydroxyuridine (ho5U) to form 5-carboxymethoxyuridine (cmo5U) at position 34 in tRNAs. This chain is tRNA U34 carboxymethyltransferase, found in Yersinia pseudotuberculosis serotype IB (strain PB1/+).